The following is a 117-amino-acid chain: Small ribosomal subunit protein uS13 (117 aa).

Positions 94-117 (SLPLRGQRTKTNARTRKGPRRLIK) are disordered.

Belongs to the universal ribosomal protein uS13 family. Part of the 30S ribosomal subunit. Forms a loose heterodimer with protein S19. Forms two bridges to the 50S subunit in the 70S ribosome.

In terms of biological role, located at the top of the head of the 30S subunit, it contacts several helices of the 16S rRNA. In the 70S ribosome it contacts the 23S rRNA (bridge B1a) and protein L5 of the 50S subunit (bridge B1b), connecting the 2 subunits; these bridges are implicated in subunit movement. Contacts the tRNAs in the A and P-sites. In Vesicomyosocius okutanii subsp. Calyptogena okutanii (strain HA), this protein is Small ribosomal subunit protein uS13.